The chain runs to 555 residues: Transcription factor kojR (555 aa).

The segment at residues 21–47 (CETCKLRKRKCDGHEPCTYCLRYEYQC) is a DNA-binding region (zn(2)-C6 fungal-type). Residues 51 to 73 (PHPRRKPAASKSSARPSEEEDSP) are disordered.

The protein resides in the nucleus. Functionally, transcription factor that regulates the gene cluster that mediates the biosynthesis of 5-hydroxy-2-hydroxymethyl-1,4-pyrone, also know as kojic acid, a by-product in the fermentation process of malting rice that acts as a chelation agent. Negatively regulates the expression of the kojic acid-related protein kap1. Improves the antioxidant capacity via the accumulation of kojic acid that is also a strong oxidant. This chain is Transcription factor kojR, found in Aspergillus oryzae (strain ATCC 42149 / RIB 40) (Yellow koji mold).